Reading from the N-terminus, the 100-residue chain is MSRVCDITGQGKSFGNKVSHSNRKTKRTYLVNLHNVTLLSDILNRKFKFKVSSRTLRTIDYKGGFDLYLLNTSSRKLTDKAQKIKKLVKNAVAKGVKVSL.

The disordered stretch occupies residues 1–21; that stretch reads MSRVCDITGQGKSFGNKVSHS. Residues 10-19 show a composition bias toward polar residues; sequence QGKSFGNKVS.

This sequence belongs to the bacterial ribosomal protein bL28 family.

This is Large ribosomal subunit protein bL28 from Ehrlichia canis (strain Jake).